The sequence spans 395 residues: uncharacterized protein (395 aa).

Helical transmembrane passes span 42-62 (LKYV…LIFI), 67-87 (LYSF…FVLL), 97-117 (LIFN…LIIF), 128-148 (ILST…SIIP), 196-216 (FIYA…LYIL), 241-261 (ILFY…SFVA), and 281-301 (LFFS…GTVV).

Its subcellular location is the cell membrane. This is an uncharacterized protein from Mycoplasma genitalium (strain ATCC 33530 / DSM 19775 / NCTC 10195 / G37) (Mycoplasmoides genitalium).